We begin with the raw amino-acid sequence, 665 residues long: Translation factor GUF1 homolog, mitochondrial (665 aa).

Residues 1-35 (MAGAAVLRRSARRIYRHLAAAPAFSRSVLQQPKRL) constitute a mitochondrion transit peptide. The disordered stretch occupies residues 34 to 53 (RLLSSQSSPEHGARGAVSGS). The tr-type G domain maps to 61 to 249 (ERVRNFSIIA…AVIERIPSPP (189 aa)). GTP is bound by residues 70–77 (AHVDHGKS), 142–146 (DTPGH), and 196–199 (NKID).

The protein belongs to the TRAFAC class translation factor GTPase superfamily. Classic translation factor GTPase family. LepA subfamily.

It is found in the mitochondrion inner membrane. The catalysed reaction is GTP + H2O = GDP + phosphate + H(+). Functionally, promotes mitochondrial protein synthesis. May act as a fidelity factor of the translation reaction, by catalyzing a one-codon backward translocation of tRNAs on improperly translocated ribosomes. Binds to mitochondrial ribosomes in a GTP-dependent manner. The chain is Translation factor GUF1 homolog, mitochondrial from Sorghum bicolor (Sorghum).